Reading from the N-terminus, the 825-residue chain is MTQEMENENLSFTQQLRKDGFIKDIDTNPTCFDDTDSQNQLPIIFIPNTILLPHTDITLNLDKQHTDNLLHTVDDNNHGIILTPKKLEEGNGNVEFYDVGVILEIKSLTEDKENELLPEEYVLELKVKDKVYVNKILKKDGFFHAQYKILPEENTLTEDEITELNKNIDETVLEIAKFLPNTDKYTRKILGKLDTQDKLAEVFPFLKVPINKKQELLELDSVKIRALKVIQLLLEQKDAIGIQMELAKKLNKKMNETHKNTLLREQMKLIQEELNMTDDTPAHKTYRERIKDAQLPKEVEEAALEEVTKLERQGQNNAEENIIRNYLDTILQLPWHKEENPTIDIVKAKKQLNDDHYGLKKVKTRIIQHLTVLKMKKDKQGSILLFVGPPGTGKTSLGKSIAAALERPYVRVSLGGVNDESEIRGHRRTYLGALPGRIINGMKKAGKTNPVFVLDEIDKMTESLNGNPTSALLEVLDPEQNDSFSDNYLEVPYDLSDVFFIGTANSLQDIPGPLRDRLEIIELDSYTNTEKHHIADEHLIKEVLLEHGLTEDDLKITYDAIDCLIEKYTRESGVRGLKREIAAIARYVTEKIVVDNVERPYVVDENMLYDILGHEKSHYDKVPDSNPPGVVTGLAWTPIGGDILFIEAVLLPGEEKLKLTGQLGDVMKESAQIAQSLIKSRLATVLKDSDIEKRDIHIHVPAGSIPKDGPSAGVTLLTTIASLVTNTPVDSTLAMTGEISLRGKVLPVGGIKEKVIAAHRSGIKTVLLPEENMKDLDDVPCEVKDDMTFKPMKTVDEVLYEALGLKLPENKPLNISIDEINKVTP.

A Lon N-terminal domain is found at 41-237 (LPIIFIPNTI…KVIQLLLEQK (197 aa)). Residue 388–395 (GPPGTGKT) participates in ATP binding. The region spanning 625 to 805 (SNPPGVVTGL…DEVLYEALGL (181 aa)) is the Lon proteolytic domain. Residues serine 711 and lysine 754 contribute to the active site.

This sequence belongs to the peptidase S16 family. As to quaternary structure, homohexamer. Organized in a ring with a central cavity.

Its subcellular location is the cytoplasm. The catalysed reaction is Hydrolysis of proteins in presence of ATP.. Its function is as follows. ATP-dependent serine protease that mediates the selective degradation of mutant and abnormal proteins as well as certain short-lived regulatory proteins. Required for cellular homeostasis and for survival from DNA damage and developmental changes induced by stress. Degrades polypeptides processively to yield small peptide fragments that are 5 to 10 amino acids long. Binds to DNA in a double-stranded, site-specific manner. The polypeptide is Lon protease (Methanosphaera stadtmanae (strain ATCC 43021 / DSM 3091 / JCM 11832 / MCB-3)).